We begin with the raw amino-acid sequence, 1195 residues long: MHDINFNILKDRAMDVDPDIRFMALEDLRKFLQDESAASTRTTLNQSLENFFPILLNMLNDQNPDVQTQAIKSFEPMVKYLSNETFSKLVKKLFALVQQNSSSTGNVTGMKSFTVSVPNIALRSLFAQSNSRDKSEFVSDKLSNSNYRFDPHLARYIMDYLIPQIVGNPVTIDSIELLIDLVTEIGYVLTQDELLNLSLYLTKVALTETGLIGKKSMVALERVVALVRTEVVIDKLLAQINQSIEPTKLFVIFQLYSVCLKRGIKPNSIDTIYNTITSNLNIEATEEEDDDDLDFDNLVKENSLKDEALTTLIDLVSQHFLPVESKNTVIALIKSYVNYNPLAQDEDFIDDEEDDISFSDDEQEDDGDGENDGSWKLRAKATILTRALLKSFPDTLELLSKEVLPVFSFADSNDQVVSEVIKSSIAIVNSTSPRDSTNVSELFPIIAARMKLAKETQVPLFLKLVESLNRFDNTSLVLEVFKIIKDRKLITSGSFDYLQFYSSTLKFHDNLPPLVIERMSSDFIKNLDDKSFNMITDSIKCLSLLFHQDSLEKLDAIVDLLIYKVENSKQYPSDLVRQSIIALGEAYGRADKQKILNVFKHSIEYEGTSKTTIDVLTQIYSTDIPSEYSYLILKKLSTSIMSSTEATSVASLLLMNKIFERLPSGDYDDTAGNLVQLLAVTNKANYECIFHILIKLVGTVLQETHRAPLLQTIVKLVNEGKIEVADNSFFQFITTACNQIPDLYNFFEDGLNLNSELSAKILAICASQNKLENKIMERREEFQNYYNSNINDSRLAFDILFLGYVGTHIEVKELDVQTLIGLLSNSQLTNDDNISAASTALGLIAQKHIDSAVPIILNAYESSEKTIIRGSLVDSLSIAADACNEDQKRVIWDKVFNFPVEFDHEVITELKKSGELLGKIPVVDELTINTDNLKTTYLILVITKSLLNNLQATKVNNTLLDSLIKSSIEWLNIVNIDIRQIVVGNLLTGLHSKPDTILPILDSIILPKIFDQLQAEDSFKKIITMGPYKYVLDEGLEIRKLCYEFIYSVISLENAVIKKYNINLEKIASKIIEVGLIDTQTDITVLACINLTNYIELHKDSAVELITRDGGNAFTTMINNLKKQLSKKLSAKASTQDSESHQERIKSIIKLSKKFASVVEAAESIELAAAIRVWNEYNNDLKTNFTIYYNSTDGV.

HEAT repeat units follow at residues 1–37, 45–83, 168–206, 397–434, 436–474, 703–742, 846–885, and 999–1037; these read MHDINFNILKDRAMDVDPDIRFMALEDLRKFLQDESA, NQSLENFFPILLNMLNDQNPDVQTQAIKSFEPMVKYLSN, NPVTIDSIELLIDLVTEIGYVLTQDELLNLSLYLTKVAL, ELLSKEVLPVFSFADSNDQVVSEVIKSSIAIVNSTSPR, STNVSELFPIIAARMKLAKETQVPLFLKLVESLNRFDNT, ETHRAPLLQTIVKLVNEGKIEVADNSFFQFITTACNQIPD, QKHIDSAVPIILNAYESSEKTIIRGSLVDSLSIAADACNE, and PILDSIILPKIFDQLQAEDSFKKIITMGPYKYVLDEGLE.

This sequence belongs to the CAND family.

Functionally, key assembly factor of SCF (SKP1-CUL1-F-box protein) E3 ubiquitin ligase complexes that promotes the exchange of the substrate-recognition F-box subunit in SCF complexes, thereby playing a key role in the cellular repertoire of SCF complexes. Acts as a F-box protein exchange factor. This Candida albicans (strain SC5314 / ATCC MYA-2876) (Yeast) protein is Cullin-associated NEDD8-dissociated protein 1 (TIP120).